We begin with the raw amino-acid sequence, 189 residues long: Protein OXIDATIVE STRESS 3 LIKE 2 (189 aa).

Disordered stretches follow at residues 22–49 and 128–147; these read SSSTSSDSIGENSDDDEGGENEIESSYN and AMSQREGDSSSSGDDSLPTL. Positions 33 to 44 are enriched in acidic residues; that stretch reads NSDDDEGGENEI.

It localises to the nucleus. The protein is Protein OXIDATIVE STRESS 3 LIKE 2 of Arabidopsis thaliana (Mouse-ear cress).